Consider the following 85-residue polypeptide: Photosystem I reaction center subunit PsaK (85 aa).

Helical transmembrane passes span 13-33 (VSWT…AIAI) and 59-79 (GAML…ILGL).

This sequence belongs to the PsaG/PsaK family.

The protein resides in the cellular thylakoid membrane. The polypeptide is Photosystem I reaction center subunit PsaK (Synechococcus sp. (strain WH7803)).